Reading from the N-terminus, the 306-residue chain is Polyisoprenyl-teichoic acid--peptidoglycan teichoic acid transferase TagU (306 aa).

The Cytoplasmic portion of the chain corresponds to methionine 1 to threonine 11. The chain crosses the membrane as a helical; Signal-anchor for type II membrane protein span at residues leucine 12–tyrosine 32. Residues tyrosine 33–lysine 306 lie on the Extracellular side of the membrane.

It belongs to the LytR/CpsA/Psr (LCP) family. Interacts with MreB. Interacts with FloT.

It localises to the cell membrane. Its subcellular location is the membrane raft. The protein operates within cell wall biogenesis. Its function is as follows. May catalyze the final step in cell wall teichoic acid biosynthesis, the transfer of the anionic cell wall polymers (APs) from their lipid-linked precursor to the cell wall peptidoglycan (PG). In Bacillus subtilis (strain 168), this protein is Polyisoprenyl-teichoic acid--peptidoglycan teichoic acid transferase TagU.